A 593-amino-acid polypeptide reads, in one-letter code: uncharacterized protein (593 aa).

Transmembrane regions (helical) follow at residues 21 to 41 (PAVFIPASVVIVAMIVVSVVY), 60 to 80 (VGWWYILVATGFVVFALYCGI), 97 to 117 (FSFWAWLAMLFSAGMGIGLVF), 148 to 168 (MALTVFHWGLHAWAIYVVVGL), 204 to 224 (VDVIAIVGTLFGVATSLGFGI), 243 to 263 (WMVGMIAAITATATASVVSGV), 275 to 295 (MALAAALALFVLLLGPTLFLL), 328 to 348 (WTIFYWGWWISWAPFVGMFIA), 359 to 379 (FIGAVLLVPTVIASLWFTIFG), 410 to 430 (GLPIGAITSVLAVLVIVFFFV), 457 to 477 (VYWAVLEGVAAAVLLLIGGAG), and 485 to 505 (AAIATALPFSIVMVVACYAMT).

Belongs to the BCCT transporter (TC 2.A.15) family.

It localises to the cell membrane. This is an uncharacterized protein from Mycobacterium tuberculosis (strain CDC 1551 / Oshkosh).